Here is a 172-residue protein sequence, read N- to C-terminus: Adenine phosphoribosyltransferase (172 aa).

The protein belongs to the purine/pyrimidine phosphoribosyltransferase family. In terms of assembly, homodimer.

It is found in the cytoplasm. The catalysed reaction is AMP + diphosphate = 5-phospho-alpha-D-ribose 1-diphosphate + adenine. Its pathway is purine metabolism; AMP biosynthesis via salvage pathway; AMP from adenine: step 1/1. Catalyzes a salvage reaction resulting in the formation of AMP, that is energically less costly than de novo synthesis. The chain is Adenine phosphoribosyltransferase from Staphylococcus aureus (strain bovine RF122 / ET3-1).